We begin with the raw amino-acid sequence, 74 residues long: Exodeoxyribonuclease 7 small subunit (74 aa).

It belongs to the XseB family. As to quaternary structure, heterooligomer composed of large and small subunits.

It localises to the cytoplasm. The enzyme catalyses Exonucleolytic cleavage in either 5'- to 3'- or 3'- to 5'-direction to yield nucleoside 5'-phosphates.. Bidirectionally degrades single-stranded DNA into large acid-insoluble oligonucleotides, which are then degraded further into small acid-soluble oligonucleotides. The polypeptide is Exodeoxyribonuclease 7 small subunit (Thermotoga neapolitana (strain ATCC 49049 / DSM 4359 / NBRC 107923 / NS-E)).